A 202-amino-acid chain; its full sequence is Transmembrane 4 L6 family member 4 (202 aa).

At 1–9 the chain is on the cytoplasmic side; it reads MCTGGCARC. The helical transmembrane segment at 10–30 threads the bilayer; the sequence is LGGTLIPLAVFGLLANILLFF. Residues 31–48 are Extracellular-facing; the sequence is PGGKVVNDKSHLSDEVWY. A helical membrane pass occupies residues 49-69; it reads FGGILGSGVLMIFPALVFLGL. The Cytoplasmic segment spans residues 70–93; the sequence is QNNDCCGCCGNEGCGKRFAMFTST. The helical transmembrane segment at 94–114 threads the bilayer; sequence LFAVIGFLGAGYSFIVSAVSI. At 115–158 the chain is on the extracellular side; it reads NKGPKCFMANGTWGYPFHDGDYLKDQALWSECEEPRDVVPWNLT. Asn-156 is a glycosylation site (N-linked (GlcNAc...) asparagine). The helical transmembrane segment at 159 to 179 threads the bilayer; the sequence is LFSILLVIGGIQMVLCAIQVI. At 180–202 the chain is on the cytoplasmic side; it reads NGLLGTLCGDCQCCGCCGGDGPV.

Belongs to the L6 tetraspanin family.

The protein localises to the membrane. In terms of biological role, regulates the adhesive and proliferative status of intestinal epithelial cells. Can mediate density-dependent cell proliferation. The polypeptide is Transmembrane 4 L6 family member 4 (Tm4sf4) (Mus musculus (Mouse)).